The chain runs to 90 residues: Small ribosomal subunit protein bS20 (90 aa).

The protein belongs to the bacterial ribosomal protein bS20 family.

Its function is as follows. Binds directly to 16S ribosomal RNA. This chain is Small ribosomal subunit protein bS20, found in Nautilia profundicola (strain ATCC BAA-1463 / DSM 18972 / AmH).